Here is a 959-residue protein sequence, read N- to C-terminus: Probable serine/threonine-protein kinase DDB_G0291664 (959 aa).

The disordered stretch occupies residues 154 to 213 (QQQQQQQLTPPPSPPLLPIPQPPAQNEEQQLTQPPSIPPPQQKQIKIQKSDRGTQVKSIT). Pro residues predominate over residues 162–176 (TPPPSPPLLPIPQPP). 2 ANK repeats span residues 294-324 (KGET…CMGI) and 333-362 (LNKN…PLKM). The 281-residue stretch at 482–762 (IDFHTQIGSA…EVGIIETEFL (281 aa)) folds into the Protein kinase domain. Residues 488–496 (IGSAGNASV) and K509 contribute to the ATP site. D610 acts as the Proton acceptor in catalysis. The segment at 904–959 (NNINNNNNNNNNCNNSKKFKTTSESTSALGSDASSSSSPSSSSPSPKYSASIYHHQ) is disordered.

The protein belongs to the protein kinase superfamily. Ser/Thr protein kinase family.

It carries out the reaction L-seryl-[protein] + ATP = O-phospho-L-seryl-[protein] + ADP + H(+). It catalyses the reaction L-threonyl-[protein] + ATP = O-phospho-L-threonyl-[protein] + ADP + H(+). In Dictyostelium discoideum (Social amoeba), this protein is Probable serine/threonine-protein kinase DDB_G0291664.